The primary structure comprises 216 residues: Adenylate kinase (216 aa).

Glycine 10–threonine 15 is a binding site for ATP. The interval serine 30–valine 59 is NMP. Residues threonine 31, arginine 36, glutamine 57–valine 59, glycine 85–arginine 88, and glutamine 92 contribute to the AMP site. An LID region spans residues glycine 126–aspartate 163. Arginine 127 contacts ATP. Residues cysteine 130 and cysteine 133 each contribute to the Zn(2+) site. Serine 136–tyrosine 137 lines the ATP pocket. Cysteine 150 and cysteine 153 together coordinate Zn(2+). Positions 160 and 171 each coordinate AMP. Glutamine 199 is a binding site for ATP.

Belongs to the adenylate kinase family. In terms of assembly, monomer.

It is found in the cytoplasm. The enzyme catalyses AMP + ATP = 2 ADP. It participates in purine metabolism; AMP biosynthesis via salvage pathway; AMP from ADP: step 1/1. Catalyzes the reversible transfer of the terminal phosphate group between ATP and AMP. Plays an important role in cellular energy homeostasis and in adenine nucleotide metabolism. The polypeptide is Adenylate kinase (Clostridium novyi (strain NT)).